Reading from the N-terminus, the 79-residue chain is Moronecidin (79 aa).

An N-terminal signal peptide occupies residues M1 to A22. At G44 the chain carries Glycine amide. Residues G45–D79 are disordered. A propeptide spanning residues A47–D79 is cleaved from the precursor. The span at Q52–Q69 shows a compositional bias: low complexity.

In terms of tissue distribution, expressed in mast cells in gill, skin and gut, and in lining blood vessels in the viscera. Also in intestine, spleen, anterior kidney, and blood cells.

It localises to the secreted. Its function is as follows. Antimicrobial peptide with broad-spectrum activity against Gram-positive and Gram-negative bacteria as well as against a variety of fungi. Rapidly inactivates channel catfish herpesvirus (ED(50)=4 uM) and frog virus 3 (ED(50)=13 uM) over a wide temperature range. Seems to disrupt the membranes by adopting an alpha helical conformation and forming toroidal pores. Has hemolytic activity. The sequence is that of Moronecidin from Morone saxatilis (Striped bass).